Reading from the N-terminus, the 96-residue chain is Neutrophil defensin 3 (96 aa).

The first 19 residues, methionine 1–alanine 19, serve as a signal peptide directing secretion. Residues glutamate 20–methionine 66 constitute a propeptide that is removed on maturation. 3 disulfides stabilise this stretch: cysteine 68/cysteine 96, cysteine 70/cysteine 85, and cysteine 75/cysteine 95.

The protein resides in the secreted. Functionally, has bacteriostatic activity against Gram-positive bacteria S.aureus and L.monocytogenes and Gram-negative bacterium E.coli and antifungal activity against C.neoformans. The polypeptide is Neutrophil defensin 3 (Macaca mulatta (Rhesus macaque)).